The following is a 747-amino-acid chain: Histone-lysine N-methyltransferase EZH1 (747 aa).

Positions 188 to 231 (DEEEDGHNDPSDGKQDDSKEDLPVTRKRKRHAIEGNKKSSKKQF) are disordered. Positions 194-211 (HNDPSDGKQDDSKEDLPV) are enriched in basic and acidic residues. Lysine 327 participates in a covalent cross-link: Glycyl lysine isopeptide (Lys-Gly) (interchain with G-Cter in SUMO2). A disordered region spans residues 368–414 (VSASCSNASASAMAETKEGDSDRDTGNDWASSSSEANSRCQTPTKQK). Positions 369–381 (SASCSNASASAMA) are enriched in low complexity. The span at 382–393 (ETKEGDSDRDTG) shows a compositional bias: basic and acidic residues. Polar residues predominate over residues 395 to 414 (DWASSSSEANSRCQTPTKQK). Positions 491–496 (QKKKRK) match the Nuclear localization signal motif. Residues 504-606 (CRKIQLKKDN…CKVVSCKNCS (103 aa)) form the CXC domain. Residues 613 to 728 (KHLLLAPSDV…AGEELFFDYR (116 aa)) enclose the SET domain.

Belongs to the class V-like SAM-binding methyltransferase superfamily. Histone-lysine methyltransferase family. EZ subfamily. As to quaternary structure, component of the PRC2/EED-EZH1 complex, which includes EED, EZH1, SUZ12, RBBP4 and AEBP2. The PRC2/EED-EZH1 is less abundant than the PRC2/EED-EZH2 complex, has weak methyltransferase activity and compacts chromatin in the absence of the methyltransferase cofactor S-adenosyl-L-methionine (SAM). Interacts with EZHIP; the interaction blocks EZH1 methyltransferase activity. As to expression, expressed at high levels in kidney, adrenal gland, testis and brain.

The protein localises to the nucleus. It carries out the reaction L-lysyl(27)-[histone H3] + 3 S-adenosyl-L-methionine = N(6),N(6),N(6)-trimethyl-L-lysyl(27)-[histone H3] + 3 S-adenosyl-L-homocysteine + 3 H(+). Functionally, polycomb group (PcG) protein. Catalytic subunit of the PRC2/EED-EZH1 complex, which methylates 'Lys-27' of histone H3, leading to transcriptional repression of the affected target gene. Able to mono-, di- and trimethylate 'Lys-27' of histone H3 to form H3K27me1, H3K27me2 and H3K27me3, respectively. Required for embryonic stem cell derivation and self-renewal, suggesting that it is involved in safeguarding embryonic stem cell identity. Compared to EZH2-containing complexes, it is less abundant in embryonic stem cells, has weak methyltransferase activity and plays a less critical role in forming H3K27me3, which is required for embryonic stem cell identity and proper differentiation. The sequence is that of Histone-lysine N-methyltransferase EZH1 (Ezh1) from Mus musculus (Mouse).